A 573-amino-acid polypeptide reads, in one-letter code: 2-succinyl-5-enolpyruvyl-6-hydroxy-3-cyclohexene-1-carboxylate synthase (573 aa).

The protein belongs to the TPP enzyme family. MenD subfamily. As to quaternary structure, homodimer. Requires Mg(2+) as cofactor. It depends on Mn(2+) as a cofactor. Thiamine diphosphate is required as a cofactor.

The enzyme catalyses isochorismate + 2-oxoglutarate + H(+) = 5-enolpyruvoyl-6-hydroxy-2-succinyl-cyclohex-3-ene-1-carboxylate + CO2. The protein operates within quinol/quinone metabolism; 1,4-dihydroxy-2-naphthoate biosynthesis; 1,4-dihydroxy-2-naphthoate from chorismate: step 2/7. It functions in the pathway quinol/quinone metabolism; menaquinone biosynthesis. Catalyzes the thiamine diphosphate-dependent decarboxylation of 2-oxoglutarate and the subsequent addition of the resulting succinic semialdehyde-thiamine pyrophosphate anion to isochorismate to yield 2-succinyl-5-enolpyruvyl-6-hydroxy-3-cyclohexene-1-carboxylate (SEPHCHC). This Shewanella sp. (strain W3-18-1) protein is 2-succinyl-5-enolpyruvyl-6-hydroxy-3-cyclohexene-1-carboxylate synthase.